The primary structure comprises 150 residues: Large ribosomal subunit protein bL9 (150 aa).

The protein belongs to the bacterial ribosomal protein bL9 family.

Functionally, binds to the 23S rRNA. The protein is Large ribosomal subunit protein bL9 of Shewanella sp. (strain MR-4).